The sequence spans 462 residues: Argininosuccinate lyase (462 aa).

It belongs to the lyase 1 family. Argininosuccinate lyase subfamily.

It localises to the cytoplasm. The enzyme catalyses 2-(N(omega)-L-arginino)succinate = fumarate + L-arginine. The protein operates within amino-acid biosynthesis; L-arginine biosynthesis; L-arginine from L-ornithine and carbamoyl phosphate: step 3/3. This is Argininosuccinate lyase from Caldicellulosiruptor bescii (strain ATCC BAA-1888 / DSM 6725 / KCTC 15123 / Z-1320) (Anaerocellum thermophilum).